The sequence spans 234 residues: MKNLVVLTGAGMSAESGISTFRDAGGLWDKYPVEQVATPEGYQRDPALVINFYNARRKQLLEVKPNRGHELLAELEKNFNVTVITQNVDNLHERAGSSHIVHLHGELTKVCSSRDPYNPHYIKELKPEEYEVKMGDKAGDGTQLRPFIVWFGEAVPEIETAVRYVEKADIFVIIGTSLNVYPAAGLLHYVPRGAEVYLIDPKPVDTHTSRSIHVLRKGASEGVEELKQLLIPAP.

Positions 1-234 (MKNLVVLTGA…ELKQLLIPAP (234 aa)) constitute a Deacetylase sirtuin-type domain. 9-28 (GAGMSAESGISTFRDAGGLW) contacts NAD(+). Residues Y53 and R56 each contribute to the substrate site. 86–89 (QNVD) lines the NAD(+) pocket. Residue H104 is the Proton acceptor of the active site. An NAD(+)-binding site is contributed by 175–177 (GTS).

This sequence belongs to the sirtuin family. Class III subfamily.

It is found in the cytoplasm. It carries out the reaction N(6)-acetyl-L-lysyl-[protein] + NAD(+) + H2O = 2''-O-acetyl-ADP-D-ribose + nicotinamide + L-lysyl-[protein]. The enzyme catalyses N(6)-succinyl-L-lysyl-[protein] + NAD(+) + H2O = 2''-O-succinyl-ADP-D-ribose + nicotinamide + L-lysyl-[protein]. Functionally, NAD-dependent lysine deacetylase and desuccinylase that specifically removes acetyl and succinyl groups on target proteins. Modulates the activities of several proteins which are inactive in their acylated form. The sequence is that of NAD-dependent protein deacylase from Bacteroides thetaiotaomicron (strain ATCC 29148 / DSM 2079 / JCM 5827 / CCUG 10774 / NCTC 10582 / VPI-5482 / E50).